Reading from the N-terminus, the 504-residue chain is MDESSLEEAIGTYRAQLQQVELALSAGLGSAEQDDLLKLKEDLQQLIELTESSLVSVKKSQLLAALEEASTNQSDTSVPQETALDNEFAAFYAELSEDSNEVKPNPDTDEENEEEEQDISGTKVCAPYRTSWGTLEYHNAMVVCPEEPEGEEARVRVFYIHPTHKSMKPCGFYLEGKCRFMDNCRYSHGEVVCVSELRDFLEADISNMESGSACLAKHEDGIWYPARISEIEGGFYTVKFDSLLLKEAVLEADGIIPPLRQDDVSSSSSSDSEDDAECDGGYAKVFTSREEDLAQVNTAEFCGWEAHTRGIGSKLLMKMGYELGKGLGKTLSGRVEPVQAVVLPKGHSLDICAELTQRKTAAAIAKNNPTSHKRKAKKKKASTSTRHNVFDFLNSKLGDRAQSASHSSSSLVTGAEAYRGGKSTKRSLNVRLFEAAEKVTQVEREIQQLTKSLSKRNGRDAAVVSRLEEKLAASRKLLEQLKAQEQAIQREQKKADTHKKMTEF.

The segment at 95–121 is disordered; the sequence is LSEDSNEVKPNPDTDEENEEEEQDISG. Positions 107-118 are enriched in acidic residues; the sequence is DTDEENEEEEQD. Residues 165-191 form a C3H1-type zinc finger; that stretch reads KSMKPCGFYLEGKCRFMDNCRYSHGEV. In terms of domain architecture, G-patch spans 308–354; sequence TRGIGSKLLMKMGYELGKGLGKTLSGRVEPVQAVVLPKGHSLDICAE.

Its subcellular location is the nucleus. Functionally, transcription repressor that specifically binds the 5'-GGAG[GA]A[GA]A-3' consensus sequence. Represses transcription by recruiting the chromatin multiprotein complex NuRD to target promoters. Negatively regulates expression of EGFR, a gene involved in cell proliferation, survival and migration. This Danio rerio (Zebrafish) protein is Zinc finger CCCH-type with G patch domain-containing protein (zgpat).